The following is a 363-amino-acid chain: Putative aryl-alcohol dehydrogenase AAD3 (363 aa).

This sequence belongs to the aldo/keto reductase family. Aldo/keto reductase 2 subfamily.

This is Putative aryl-alcohol dehydrogenase AAD3 (AAD3) from Saccharomyces cerevisiae (strain ATCC 204508 / S288c) (Baker's yeast).